Reading from the N-terminus, the 450-residue chain is Putative receptor-like protein kinase At1g72540 (450 aa).

Threonine 73 carries the post-translational modification Phosphothreonine. One can recognise a Protein kinase domain in the interval 84–365 (FSKYNFLGEG…TVVKTLEPIL (282 aa)). ATP is bound by residues 90 to 98 (LGEGGFGEV) and lysine 119. Residue tyrosine 164 is modified to Phosphotyrosine. Aspartate 214 (proton acceptor) is an active-site residue. Serine 218 is subject to Phosphoserine. Threonine 254 bears the Phosphothreonine mark. Tyrosine 262 bears the Phosphotyrosine mark.

This sequence belongs to the protein kinase superfamily. Ser/Thr protein kinase family.

The catalysed reaction is L-seryl-[protein] + ATP = O-phospho-L-seryl-[protein] + ADP + H(+). It catalyses the reaction L-threonyl-[protein] + ATP = O-phospho-L-threonyl-[protein] + ADP + H(+). This chain is Putative receptor-like protein kinase At1g72540, found in Arabidopsis thaliana (Mouse-ear cress).